We begin with the raw amino-acid sequence, 609 residues long: MIQVLLVTICLAAFPYQGSSIILESGNVNDYEVIYPRKVTALPKGAVQPKYEDAMQYELKVNGEPVVLHLGKNKGLFSKDYSETHYSPDGREITTYPLVEDHCYYHGRIENDADSTASISACNGLKGHFKLQGEMYLIEPLKLPDSEAHAVYKYENVEKEDEALKMCGVTQNWESYEPIKKASQLVVTAEHQKYNPFRFVELFLVVDKAMVTKNNGDLDKIKTRMYEIVNTVNEIYRYMYIHVALVGLEIWSNEDKITVKPEAGYTLNAFGEWRKTDLLTRKKHDNAQLLTAIDLDRVIGLAYVGSMCHPKRSTGIIQDYSEINLVVAVIMAHEMGHNLGINHDSGYCSCGDYACIMRPEISPEPSTFFSNCSYFECWDFIMNHNPECILNEPLGTDIISPPVCGNELLEVGEECDCGTPENCQNECCDAATCKLKSGSQCGHGDCCEQCKFSKSGTECRASMSECDPAEHCTGQSSECPADVFHKNGQPCLDNYGYCYNGNCPIMYHQCYDLFGADVYEAEDSCFERNQKGNYYGYCRKENGNKIPCAPEDVKCGRLYCKDNSPGQNNPCKMFYSNEDEHKGMVLPGTKCADGKVCSNGHCVDVATAY.

The first 20 residues, 1–20 (MIQVLLVTICLAAFPYQGSS), serve as a signal peptide directing secretion. Residues 21–189 (IILESGNVND…KKASQLVVTA (169 aa)) constitute a propeptide that is removed on maturation. Glu-190 is modified (pyrrolidone carboxylic acid (Glu)). Residues 198–393 (RFVELFLVVD…HNPECILNEP (196 aa)) enclose the Peptidase M12B domain. 2 residues coordinate Ca(2+): Glu-201 and Asp-285. 3 disulfide bridges follow: Cys-308/Cys-388, Cys-348/Cys-372, and Cys-350/Cys-355. His-333 is a binding site for Zn(2+). Glu-334 is an active-site residue. Zn(2+) is bound by residues His-337 and His-343. N-linked (GlcNAc...) asparagine glycosylation is present at Asn-371. The Ca(2+) site is built by Cys-388, Asn-391, Val-403, Asn-406, Leu-408, Glu-410, Glu-413, and Asp-416. One can recognise a Disintegrin domain in the interval 401–487 (PPVCGNELLE…ECPADVFHKN (87 aa)). Intrachain disulfides connect Cys-404–Cys-423, Cys-404–Cys-433, Cys-415–Cys-428, Cys-415–Cys-433, Cys-417–Cys-423, Cys-427–Cys-450, Cys-441–Cys-447, Cys-446–Cys-472, Cys-459–Cys-479, Cys-466–Cys-491, Cys-466–Cys-498, Cys-491–Cys-503, Cys-498–Cys-503, Cys-510–Cys-525, Cys-510–Cys-560, Cys-525–Cys-571, Cys-538–Cys-548, Cys-548–Cys-555, Cys-555–Cys-597, Cys-560–Cys-571, Cys-591–Cys-602, and Cys-597–Cys-602. The tract at residues 459 to 472 (CRASMSECDPAEHC) is inhibits platelet aggregation. The D/ECD-tripeptide motif lies at 465-467 (ECD). Asp-467, Pro-468, Glu-470, Asp-482, and Val-483 together coordinate Ca(2+).

The protein belongs to the venom metalloproteinase (M12B) family. P-III subfamily. P-IIIb sub-subfamily. As to quaternary structure, monomer or heterodimer; non-covalently linked. Interacts with fibrillar collagen. Requires Zn(2+) as cofactor. In terms of processing, the N-terminus is blocked. In terms of tissue distribution, expressed by the venom gland.

The protein resides in the secreted. Functionally, zinc metalloprotease that abolishes platelet aggregation induced by collagen, but has no effect on platelet aggregation induced by ADP or thromboxane analog. This inhibition may be due to its ability to bind collagen and block the binding site on collagen for platelets and/or to its ability to bind to the platelet alpha-2/beta-1 collagen receptor (ITGA2/ITGB1) to block its interaction with collagen and hence prevent platelet stimulation. Its function is as follows. Abolishes platelet aggregation induced by collagen (IC(50)=66 nM) but not ADP-stimulated platelet aggregation. This inhibition may be due to its ability to bind collagen and block the binding site on collagen for platelets and/or to its ability to bind to the platelet alpha-2/beta-1 collagen receptor (ITGA2/ITGB1) to block its interaction with collagen and hence prevent platelet stimulation. The polypeptide is Zinc metalloproteinase-disintegrin-like VAP2B (Crotalus atrox (Western diamondback rattlesnake)).